The chain runs to 309 residues: Protein FdhE (309 aa).

The protein belongs to the FdhE family.

Its subcellular location is the cytoplasm. Functionally, necessary for formate dehydrogenase activity. This chain is Protein FdhE, found in Escherichia coli O139:H28 (strain E24377A / ETEC).